A 236-amino-acid chain; its full sequence is Ribonuclease HII (236 aa).

In terms of domain architecture, RNase H type-2 spans 27 to 219 (RILCGVDEAG…VRRALDGAPP (193 aa)). Aspartate 33, glutamate 34, and aspartate 128 together coordinate a divalent metal cation. Positions 212 to 236 (RALDGAPPPAGDAVPQTDAKTAWAD) are disordered.

It belongs to the RNase HII family. It depends on Mn(2+) as a cofactor. Requires Mg(2+) as cofactor.

The protein localises to the cytoplasm. It catalyses the reaction Endonucleolytic cleavage to 5'-phosphomonoester.. In terms of biological role, endonuclease that specifically degrades the RNA of RNA-DNA hybrids. The chain is Ribonuclease HII from Ralstonia nicotianae (strain ATCC BAA-1114 / GMI1000) (Ralstonia solanacearum).